Reading from the N-terminus, the 550-residue chain is CCR4-NOT transcription complex subunit 6-like-A (550 aa).

The segment at 1–148 (MPKEKYDPPD…LYQEPDGMRK (148 aa)) is required for interaction with cnot1, cnot3 and cnot7. 4 LRR repeats span residues 52–73 (HLTVLHLSDNNLSRIPPDIAKL), 75–96 (NLVYLDLSSNKLRSLPAELGNV), 98–120 (SLRELLLNNNLLRVLPFELGRLF), and 121–143 (RLQTLGLKGNPLSQDILSLYQEP). The segment at 153 to 550 (MLDNLSVHPE…INGVHLPSRR (398 aa)) is nuclease domain. Mg(2+) is bound at residue glutamate 235. Substrate is bound by residues glutamate 235, glutamate 271, histidine 355, and proline 360. Aspartate 405 is a binding site for Mg(2+). The active-site Proton donor/acceptor is the aspartate 405. Substrate contacts are provided by asparagine 407, asparagine 474, and phenylalanine 479.

The protein belongs to the CCR4/nocturin family. As to quaternary structure, component of the CCR4-NOT complex. Requires Mg(2+) as cofactor.

The protein resides in the cytoplasm. It localises to the nucleus. It catalyses the reaction Exonucleolytic cleavage of poly(A) to 5'-AMP.. Functionally, poly(A) nuclease with 3'-5' RNase activity. Catalytic component of the CCR4-NOT complex which is one of the major cellular mRNA deadenylases and is linked to various cellular processes including bulk mRNA degradation, miRNA-mediated repression, translational repression during translational initiation and general transcription regulation. Additional complex functions may be a consequence of its influence on mRNA expression. The polypeptide is CCR4-NOT transcription complex subunit 6-like-A (cnot6l-a) (Xenopus laevis (African clawed frog)).